Consider the following 140-residue polypeptide: Sex-regulated protein janus-B (140 aa).

Residue Arg-42 participates in substrate binding. The Proton acceptor role is filled by His-69. A substrate-binding site is contributed by 110 to 112 (SRT).

It belongs to the janus family.

Functionally, janA and janB regulate somatic sex differentiation. The protein is Sex-regulated protein janus-B (janB) of Drosophila yakuba (Fruit fly).